The primary structure comprises 475 residues: Probable 5'-adenylylsulfate reductase 1, chloroplastic (475 aa).

The N-terminal 63 residues, 1–63 (MASATASISS…AAEPARQPVS (63 aa)), are a transit peptide targeting the chloroplast. The reductase domain stretch occupies residues 72 to 327 (AAPVAEDAAA…KAKECGLHKG (256 aa)). One can recognise a Thioredoxin domain in the interval 341–475 (HKAGGANGNG…SLLAFVNSLR (135 aa)). Catalysis depends on nucleophile residues cysteine 393 and cysteine 396. Cysteines 393 and 396 form a disulfide.

Belongs to the APS reductase family. Requires [4Fe-4S] cluster as cofactor.

The protein resides in the plastid. It is found in the chloroplast. The catalysed reaction is glutathione disulfide + sulfite + AMP + 2 H(+) = adenosine 5'-phosphosulfate + 2 glutathione. In terms of biological role, reduces sulfate for Cys biosynthesis. The polypeptide is Probable 5'-adenylylsulfate reductase 1, chloroplastic (APR1) (Oryza sativa subsp. japonica (Rice)).